We begin with the raw amino-acid sequence, 176 residues long: Peptidyl-tRNA hydrolase (176 aa).

Tyr14 contacts tRNA. His19 serves as the catalytic Proton acceptor. Residues Tyr65, Asn67, and Asn113 each coordinate tRNA.

It belongs to the PTH family. Monomer.

Its subcellular location is the cytoplasm. It catalyses the reaction an N-acyl-L-alpha-aminoacyl-tRNA + H2O = an N-acyl-L-amino acid + a tRNA + H(+). Its function is as follows. Hydrolyzes ribosome-free peptidyl-tRNAs (with 1 or more amino acids incorporated), which drop off the ribosome during protein synthesis, or as a result of ribosome stalling. In terms of biological role, catalyzes the release of premature peptidyl moieties from peptidyl-tRNA molecules trapped in stalled 50S ribosomal subunits, and thus maintains levels of free tRNAs and 50S ribosomes. This Phytoplasma mali (strain AT) protein is Peptidyl-tRNA hydrolase.